Consider the following 303-residue polypeptide: UDP-N-acetylenolpyruvoylglucosamine reductase (303 aa).

The FAD-binding PCMH-type domain maps to 29 to 196; sequence KIGGPADVLV…LEAVLQLEQK (168 aa). Arginine 174 is a catalytic residue. Serine 225 serves as the catalytic Proton donor. Glutamate 295 is a catalytic residue.

Belongs to the MurB family. FAD is required as a cofactor.

Its subcellular location is the cytoplasm. The catalysed reaction is UDP-N-acetyl-alpha-D-muramate + NADP(+) = UDP-N-acetyl-3-O-(1-carboxyvinyl)-alpha-D-glucosamine + NADPH + H(+). Its pathway is cell wall biogenesis; peptidoglycan biosynthesis. Functionally, cell wall formation. This is UDP-N-acetylenolpyruvoylglucosamine reductase from Bacillus licheniformis (strain ATCC 14580 / DSM 13 / JCM 2505 / CCUG 7422 / NBRC 12200 / NCIMB 9375 / NCTC 10341 / NRRL NRS-1264 / Gibson 46).